An 808-amino-acid polypeptide reads, in one-letter code: MAGTVVLDDVELREAQRDYLDFLDDEEDQGIYQSKVRELISDNQYRLIVNVNDLRRKNEKRANRLLNNAFEELVAFQRALKDFVASIDATYAKQYEEFYVGLEGSFGSKHVSPRTLTSCFLSCVVCVEGIVTKCSLVRPKVVRSVHYCPATKKTIERRYSDLTTLVAFPSSSVYPTKDEENNPLETEYGLSVYKDHQTITIQEMPEKAPAGQLPRSVDVILDDDLVDKAKPGDRVQVVGTYRCLPGKKGGYTSGTFRTVLIACNVKQMSKDAQPSFSAEDIAKIKKFSKTRSKDIFDQLAKSLAPSIHGHDYVKKAILCLLLGGVERDLENGSHIRGDINILLIGDPSVAKSQLLRYVLCTAPRAIPTTGRGSSGVGLTAAVTTDQETGERRLEAGAMVLADRGVVCIDEFDKMSDMDRTAIHEVMEQGRVTIAKAGIHARLNARCSVLAAANPVYGRYDQYKTPMENIGLQDSLLSRFDLLFIMLDQMDPEQDREISDHVLRMHRYRAPGEQDGDAMPLGSAVDILATDDPNFSQEDQQDTQIYEKHDNLLHGTKKKKEKMVSAAFMKKYIHVAKIIKPVLTQESATYIAEEYSRLRSQDSMSSDTARTSPVTARTLETLIRLATAHAKARMSKTVDLQDAEEAVELVQYAYFKKVLEKEKKRKKRSEDESETEDEEEKSQEDQEQKRKRRKTRQPDAKDGDSYDPYDFSDTEEEMPQVHTPKTADSQETKESQKVELSESRLKAFKVALLDVFREAHAQSIGMNRLTESINRDSEEPFSSVEIQAALSKMQDDNQVMVSEGIIFLI.

Position 2 is an N-acetylalanine (Ala-2). A phosphoserine mark is found at Ser-160 and Ser-275. Position 293 is an N6-acetyllysine (Lys-293). The MCM domain maps to 295 to 502 (IFDQLAKSLA…QDREISDHVL (208 aa)). Residues Gln-353, Leu-393, Glu-394, Ala-395, and Ala-397 each coordinate ADP. Positions 477-480 (SRFD) match the Arginine finger motif. Ala-523 provides a ligand contact to ATP. Phosphoserine; by ATM is present on Ser-535. The residue at position 547 (Lys-547) is an N6-acetyllysine. Phosphoserine is present on Ser-611. The interval 662–739 (KKRKKRSEDE…ETKESQKVEL (78 aa)) is disordered. Arg-664 contacts ATP. Phosphoserine is present on residues Ser-668 and Ser-672. Composition is skewed to acidic residues over residues 670–681 (DESETEDEEEKS) and 704–717 (SYDPYDFSDTEEEM). Thr-674 bears the Phosphothreonine mark. Position 681 is a phosphoserine (Ser-681). Phosphotyrosine is present on Tyr-708. Residue Ser-711 is modified to Phosphoserine. Phosphothreonine occurs at positions 713, 722, and 725. Basic and acidic residues predominate over residues 727–739 (DSQETKESQKVEL). Phosphoserine occurs at positions 728 and 734.

The protein belongs to the MCM family. In terms of assembly, component of the MCM2-7 complex. The complex forms a toroidal hexameric ring with the proposed subunit order MCM2-MCM6-MCM4-MCM7-MCM3-MCM5. Component of the CMG helicase complex, a hexameric ring of related MCM2-7 subunits stabilized by CDC45 and the tetrameric GINS complex. Associated with the replication-specific DNA polymerase alpha. Interacts with MCMBP. Interacts with ANKRD17. Interacts with MCM3AP isoform MCM3AP; this interaction leads to MCM3 acetylation. In terms of processing, acetylated by MCM3AP. Post-translationally, O-glycosylated (O-GlcNAcylated), in a cell cycle-dependent manner.

Its subcellular location is the nucleus. The protein localises to the chromosome. The enzyme catalyses ATP + H2O = ADP + phosphate + H(+). Functionally, acts as a component of the MCM2-7 complex (MCM complex) which is the replicative helicase essential for 'once per cell cycle' DNA replication initiation and elongation in eukaryotic cells. Core component of CDC45-MCM-GINS (CMG) helicase, the molecular machine that unwinds template DNA during replication, and around which the replisome is built. The active ATPase sites in the MCM2-7 ring are formed through the interaction surfaces of two neighboring subunits such that a critical structure of a conserved arginine finger motif is provided in trans relative to the ATP-binding site of the Walker A box of the adjacent subunit. The six ATPase active sites, however, are likely to contribute differentially to the complex helicase activity. Required for the entry in S phase and for cell division. In Homo sapiens (Human), this protein is DNA replication licensing factor MCM3.